A 432-amino-acid chain; its full sequence is Adenylosuccinate synthetase (432 aa).

Residues 13–19 (GDEGKGK) and 41–43 (GHT) contribute to the GTP site. Residue D14 is the Proton acceptor of the active site. The Mg(2+) site is built by D14 and G41. Residues 14–17 (DEGK), 39–42 (NAGH), T130, R144, Q225, T240, and R304 contribute to the IMP site. H42 (proton donor) is an active-site residue. 300-306 (ATTGRRR) is a binding site for substrate. Residues R306, 332–334 (KLD), and 415–417 (STG) each bind GTP.

This sequence belongs to the adenylosuccinate synthetase family. Homodimer. The cofactor is Mg(2+).

The protein resides in the cytoplasm. The catalysed reaction is IMP + L-aspartate + GTP = N(6)-(1,2-dicarboxyethyl)-AMP + GDP + phosphate + 2 H(+). It functions in the pathway purine metabolism; AMP biosynthesis via de novo pathway; AMP from IMP: step 1/2. Its function is as follows. Plays an important role in the de novo pathway of purine nucleotide biosynthesis. Catalyzes the first committed step in the biosynthesis of AMP from IMP. The polypeptide is Adenylosuccinate synthetase (Shigella sonnei (strain Ss046)).